A 173-amino-acid polypeptide reads, in one-letter code: RNA pyrophosphohydrolase (173 aa).

Residues 6–149 form the Nudix hydrolase domain; the sequence is GFRANVGIII…KRDVYRKVMK (144 aa). The short motif at 38–59 is the Nudix box element; the sequence is GGVDDGESAEEAMYRELYEEVG.

The protein belongs to the Nudix hydrolase family. RppH subfamily. Requires a divalent metal cation as cofactor.

Its function is as follows. Accelerates the degradation of transcripts by removing pyrophosphate from the 5'-end of triphosphorylated RNA, leading to a more labile monophosphorylated state that can stimulate subsequent ribonuclease cleavage. The chain is RNA pyrophosphohydrolase from Shewanella pealeana (strain ATCC 700345 / ANG-SQ1).